The sequence spans 224 residues: Ion-translocating oxidoreductase complex subunit E (224 aa).

5 helical membrane-spanning segments follow: residues 51–71 (LGLG…VSLF), 81–101 (IPIY…LMNA), 105–125 (SLYQ…IVIG), 140–160 (MFDG…LGAI), and 194–214 (HFLL…ILAI).

The protein belongs to the NqrDE/RnfAE family. The complex is composed of six subunits: RnfA, RnfB, RnfC, RnfD, RnfE and RnfG.

It is found in the cell inner membrane. Its function is as follows. Part of a membrane-bound complex that couples electron transfer with translocation of ions across the membrane. In Pasteurella multocida (strain Pm70), this protein is Ion-translocating oxidoreductase complex subunit E.